Here is a 304-residue protein sequence, read N- to C-terminus: Non-specific ribonucleoside hydrolase RihC (304 aa).

The active site involves His-233.

It belongs to the IUNH family. RihC subfamily.

Hydrolyzes both purine and pyrimidine ribonucleosides with a broad-substrate specificity. The polypeptide is Non-specific ribonucleoside hydrolase RihC (Escherichia coli O139:H28 (strain E24377A / ETEC)).